A 264-amino-acid polypeptide reads, in one-letter code: Glutamate racemase (264 aa).

Substrate is bound by residues 10–11 (DS) and 42–43 (YG). The Proton donor/acceptor role is filled by Cys73. 74–75 (NT) is a substrate binding site. Cys183 acts as the Proton donor/acceptor in catalysis. 184-185 (TH) lines the substrate pocket.

The protein belongs to the aspartate/glutamate racemases family.

It catalyses the reaction L-glutamate = D-glutamate. It functions in the pathway cell wall biogenesis; peptidoglycan biosynthesis. Its function is as follows. Provides the (R)-glutamate required for cell wall biosynthesis. The protein is Glutamate racemase of Streptococcus equi subsp. zooepidemicus (strain H70).